A 375-amino-acid polypeptide reads, in one-letter code: Chaperone protein DnaJ (375 aa).

The 64-residue stretch at 5–68 folds into the J domain; sequence DYYEILGVSK…KKRAQYDQFG (64 aa). Residues 135 to 217 form a CR-type zinc finger; that stretch reads GISKNINYDR…CYGKKVINER (83 aa). Residues C148, C151, C165, C168, C191, C194, C205, and C208 each contribute to the Zn(2+) site. CXXCXGXG motif repeat units follow at residues 148–155, 165–172, 191–198, and 205–212; these read CHKCQGTG, CTKCHGRG, CHECEGTG, and CEQCYGKK.

The protein belongs to the DnaJ family. As to quaternary structure, homodimer. Zn(2+) is required as a cofactor.

The protein resides in the cytoplasm. Participates actively in the response to hyperosmotic and heat shock by preventing the aggregation of stress-denatured proteins and by disaggregating proteins, also in an autonomous, DnaK-independent fashion. Unfolded proteins bind initially to DnaJ; upon interaction with the DnaJ-bound protein, DnaK hydrolyzes its bound ATP, resulting in the formation of a stable complex. GrpE releases ADP from DnaK; ATP binding to DnaK triggers the release of the substrate protein, thus completing the reaction cycle. Several rounds of ATP-dependent interactions between DnaJ, DnaK and GrpE are required for fully efficient folding. Also involved, together with DnaK and GrpE, in the DNA replication of plasmids through activation of initiation proteins. The sequence is that of Chaperone protein DnaJ from Ureaplasma parvum serovar 3 (strain ATCC 700970).